Consider the following 400-residue polypeptide: Axin-like protein 1 (400 aa).

In terms of domain architecture, RGS spans 4–132 (RSKFSIDRVL…TTTADVNTTW (129 aa)). 2 disordered regions span residues 190-233 (QETK…TLKV) and 278-306 (GTLE…GSEA). Positions 194-210 (NSSETEEHAESPRKEKS) are enriched in basic and acidic residues. Residues 287–298 (FTGTNNGFSTLQ) are compositionally biased toward polar residues. In terms of domain architecture, DIX spans 305-392 (EAPKMTVELR…RITAICRMCP (88 aa)).

In terms of assembly, interacts with bar-1, dsh-2, gsk-3, and mig-5.

Works in parallel with pry-1 in negatively regulating bar-1 signaling in vulval precursor cells and Q neuroblasts. Shown to have a role in excretory cell development. This Caenorhabditis elegans protein is Axin-like protein 1.